A 179-amino-acid polypeptide reads, in one-letter code: PLGAATSNIPPQYARSTLQPTGLTSRAQSYPTNTNPGPSAKGNLVLPLNWQLLNSPASQIPTQSTTTFRSNPPLPPVVPGRRNTSPFFFPKPTRPLSFRQILDFLGRIRATKELDCKTVSEALSLNLPKFYYPLSCDDKCPPPSVCRHVGLVGFCCPPHVTDQLIWMVGLAERFKVLGG.

Polar residues-rich tracts occupy residues 1 to 37 (PLGAATSNIPPQYARSTLQPTGLTSRAQSYPTNTNPG) and 60 to 70 (IPTQSTTTFRS). 2 disordered regions span residues 1 to 41 (PLGA…PSAK) and 60 to 82 (IPTQSTTTFRSNPPLPPVVPGRR).

Component of the acid-soluble and acid-insoluble organic matrix of calcified shell layers (at protein level).

The protein resides in the secreted. This is an uncharacterized protein from Haliotis asinina (Donkey's ear abalone).